The chain runs to 265 residues: Protein N-terminal and lysine N-methyltransferase EFM7 (265 aa).

Residues Trp55, 81 to 83 (GAA), Asp103, Trp141, and Ala169 contribute to the S-adenosyl-L-methionine site.

It belongs to the class I-like SAM-binding methyltransferase superfamily. EFM7 family.

The protein localises to the cytoplasm. S-adenosyl-L-methionine-dependent protein methyltransferase that trimethylates the N-terminal glycine 'Gly-2' of elongation factor 1-alpha, before also catalyzing the mono- and dimethylation of 'Lys-3'. This chain is Protein N-terminal and lysine N-methyltransferase EFM7, found in Gibberella zeae (strain ATCC MYA-4620 / CBS 123657 / FGSC 9075 / NRRL 31084 / PH-1) (Wheat head blight fungus).